The chain runs to 732 residues: Elongation factor 2 (732 aa).

The tr-type G domain maps to 19–228 (ELIRNIGIVA…TKITFKDIVE (210 aa)). GTP is bound by residues 28 to 35 (AHIDHGKT), 94 to 98 (DTPGH), and 148 to 151 (NKID). A Diphthamide modification is found at His598.

It belongs to the TRAFAC class translation factor GTPase superfamily. Classic translation factor GTPase family. EF-G/EF-2 subfamily.

Its subcellular location is the cytoplasm. Its function is as follows. Catalyzes the GTP-dependent ribosomal translocation step during translation elongation. During this step, the ribosome changes from the pre-translocational (PRE) to the post-translocational (POST) state as the newly formed A-site-bound peptidyl-tRNA and P-site-bound deacylated tRNA move to the P and E sites, respectively. Catalyzes the coordinated movement of the two tRNA molecules, the mRNA and conformational changes in the ribosome. This chain is Elongation factor 2 (fusA), found in Thermoplasma acidophilum (strain ATCC 25905 / DSM 1728 / JCM 9062 / NBRC 15155 / AMRC-C165).